We begin with the raw amino-acid sequence, 624 residues long: Methyl-accepting chemotaxis protein McpG (624 aa).

The helical transmembrane segment at 11-31 threads the bilayer; the sequence is ILLAASLIVILAFSLFTLYND. The 219-residue stretch at 36–254 folds into the Cache domain; that stretch reads NAIREDLENY…GLPSANWYIG (219 aa). The helical transmembrane segment at 272–292 threads the bilayer; sequence SAVIATVVAVVIIIGLLGLLI. Residues 293 to 347 form the HAMP domain; the sequence is RVLMQPLHTMTRAMEDIAEGEGDLTKRLHIHSHDEFGVLGNAFNRFVERIHSSIR. The 237-residue stretch at 352 to 588 folds into the Methyl-accepting transducer domain; it reads ATEQVNEVAL…AINMDINEIN (237 aa).

Belongs to the methyl-accepting chemotaxis (MCP) protein family.

The protein localises to the cell membrane. Its function is as follows. Chemotactic-signal transducers respond to changes in the concentration of attractants and repellents in the environment, transduce a signal from the outside to the inside of the cell, and facilitate sensory adaptation through the variation of the level of methylation. McpG is a specific gamma-aminobutyric acid (GABA) chemoreceptor that recognizes GABA over a wide range of environmental conditions. Contributes to attraction to and colonization of plant roots. The protein is Methyl-accepting chemotaxis protein McpG of Pseudomonas putida (strain ATCC 47054 / DSM 6125 / CFBP 8728 / NCIMB 11950 / KT2440).